Consider the following 347-residue polypeptide: Merozoite surface protein P12 (347 aa).

A signal peptide (or 25) is located at residues 1–23 (MIKLSKKYCLGISFVLYILLSVC). 6-Cys domains follow at residues 27-172 (KNLT…IPSL) and 175-305 (KVKG…ISSS). Asn-28 carries an N-linked (GlcNAc...) asparagine glycan. Disulfide bonds link Cys-31–Cys-53, Cys-67–Cys-138, and Cys-81–Cys-136. 6 N-linked (GlcNAc...) asparagine glycosylation sites follow: Asn-147, Asn-200, Asn-228, Asn-242, Asn-265, and Asn-322. 3 disulfides stabilise this stretch: Cys-179-Cys-211, Cys-225-Cys-286, and Cys-236-Cys-284. The GPI-anchor amidated asparagine moiety is linked to residue Asn-322. Positions 323 to 347 (SSFLTLSSYCAFITFIITSFLSFIL) are cleaved as a propeptide — removed in mature form.

As to quaternary structure, heterodimer; heterodimerizes with PF41. May form an antiparallel heterodimer with PF41.

The protein localises to the cell surface. The protein resides in the cell membrane. This Plasmodium falciparum protein is Merozoite surface protein P12 (PF12).